A 124-amino-acid chain; its full sequence is Small ribosomal subunit protein uS12 (124 aa).

At Asp89 the chain carries 3-methylthioaspartic acid.

It belongs to the universal ribosomal protein uS12 family. Part of the 30S ribosomal subunit. Contacts proteins S8 and S17. May interact with IF1 in the 30S initiation complex.

Its function is as follows. With S4 and S5 plays an important role in translational accuracy. In terms of biological role, interacts with and stabilizes bases of the 16S rRNA that are involved in tRNA selection in the A site and with the mRNA backbone. Located at the interface of the 30S and 50S subunits, it traverses the body of the 30S subunit contacting proteins on the other side and probably holding the rRNA structure together. The combined cluster of proteins S8, S12 and S17 appears to hold together the shoulder and platform of the 30S subunit. The chain is Small ribosomal subunit protein uS12 (rpsL) from Mannheimia haemolytica (Pasteurella haemolytica).